A 338-amino-acid polypeptide reads, in one-letter code: Lumican (338 aa).

The signal sequence occupies residues 1 to 18; the sequence is MSLSAFTLFLALIGGTSG. A Pyrrolidone carboxylic acid modification is found at Gln-19. Sulfotyrosine occurs at positions 20, 21, 23, and 30. The region spanning 28–66 is the LRRNT domain; that stretch reads SIYGQSSPNCAPECNCPESYPSAMYCDELKLKSVPMVPP. 10 LRR repeats span residues 67 to 88, 91 to 114, 117 to 137, 138 to 159, 160 to 181, 185 to 205, 206 to 227, 230 to 253, 255 to 276, and 277 to 296; these read GIKY…AFEN, DLQW…VFSK, QLKK…PLPK, SLED…EGLV, NLTF…AAFK, SLEY…GLPV, SLLT…YFKR, ALQY…SFNV, SLVE…NENL, and ENYY…SFCK. A glycan (N-linked (GlcNAc...) (keratan sulfate) asparagine) is linked at Asn-88. A glycan (N-linked (GlcNAc...) (keratan sulfate) asparagine) is linked at Asn-127. Asn-160 is a glycosylation site (N-linked (GlcNAc...) (keratan sulfate) asparagine). N-linked (GlcNAc...) (keratan sulfate) asparagine glycosylation occurs at Asn-252. A disulfide bridge connects residues Cys-295 and Cys-328. Ser-304 is modified (phosphoserine). The LRR 11 repeat unit spans residues 305 to 326; sequence KIKHLRLDGNRISETSLPPDMY.

Belongs to the small leucine-rich proteoglycan (SLRP) family. SLRP class II subfamily. As to quaternary structure, binds to laminin. In terms of processing, sulfated on tyrosine residue(s). Post-translationally, contains keratan sulfate. In terms of tissue distribution, cornea and other tissues.

Its subcellular location is the secreted. It localises to the extracellular space. It is found in the extracellular matrix. The protein is Lumican (LUM) of Homo sapiens (Human).